A 491-amino-acid polypeptide reads, in one-letter code: 23S rRNA (uracil(1939)-C(5))-methyltransferase RlmD (491 aa).

The segment covering 1-10 has biased composition (basic and acidic residues); it reads MSDPTEHPEI. A disordered region spans residues 1 to 28; that stretch reads MSDPTEHPEILQDPSSSAPVQGRTDLPP. Residues 18 to 81 form the TRAM domain; it reads APVQGRTDLP…NNWEQASLTA (64 aa). Residues cysteine 94, cysteine 104, cysteine 107, and cysteine 186 each coordinate [4Fe-4S] cluster. Residues glutamine 294, phenylalanine 323, asparagine 328, glutamate 344, asparagine 379, and aspartate 400 each coordinate S-adenosyl-L-methionine. Cysteine 447 functions as the Nucleophile in the catalytic mechanism.

It belongs to the class I-like SAM-binding methyltransferase superfamily. RNA M5U methyltransferase family. RlmD subfamily.

It catalyses the reaction uridine(1939) in 23S rRNA + S-adenosyl-L-methionine = 5-methyluridine(1939) in 23S rRNA + S-adenosyl-L-homocysteine + H(+). Functionally, catalyzes the formation of 5-methyl-uridine at position 1939 (m5U1939) in 23S rRNA. The chain is 23S rRNA (uracil(1939)-C(5))-methyltransferase RlmD from Paracidovorax citrulli (strain AAC00-1) (Acidovorax citrulli).